We begin with the raw amino-acid sequence, 561 residues long: NO-associated protein 1, chloroplastic/mitochondrial (561 aa).

The transit peptide at 1 to 31 directs the protein to the chloroplast and mitochondrion; that stretch reads MALRTLSTFPSLPRRHTTTRREPNLTVIYRN. GTP is bound by residues 108–111, 166–174, 223–226, 260–261, and 289–294; these read CYGC, YPGGKQFVS, TKID, SK, and NVGKSA. A CP-type G domain is found at 175–351; the sequence is ADELREKLSH…LYDTPGVHLH (177 aa).

It belongs to the TRAFAC class YlqF/YawG GTPase family. NOA1 subfamily. As to expression, expressed in aleurone layer and the embryo.

The protein localises to the mitochondrion. The protein resides in the plastid. It is found in the chloroplast. The enzyme catalyses 2 L-arginine + 3 NADPH + 4 O2 + H(+) = 2 L-citrulline + 2 nitric oxide + 3 NADP(+) + 4 H2O. With respect to regulation, stimulated by calcium/calmodulin. Inhibited by L-NAME. Not activated by tetrahydrobiopterin (BH4), FAD, FMN, or heme. Functionally, exhibits cGTPase activity; binds and hydrolyzes specifically GTP. May participate in ribosome assembly and stability and thus regulates protein synthesis in chloroplasts. The GTPase activity requires MgCl(2)and the presence of either KCl or (NH(4))(2)SO(4). Involved in the post-transcriptional regulation of the methylerythritol phosphate (MEP) pathway. Involved in chlorophyll-a fluorescence regulation. In terms of biological role, may mediate the production or accumulation of nitric oxide (NO) which is a messenger molecule involved in hormonal signaling and defense responses in plant. Acts as an antisenescence agent. Plays a crucial role in both extracellular calmodulin (ExtCaM)-triggered and salicylic acid (SA)-mediated H(2)O(2)-dependent stomatal closure. This chain is NO-associated protein 1, chloroplastic/mitochondrial (NOA1), found in Arabidopsis thaliana (Mouse-ear cress).